We begin with the raw amino-acid sequence, 331 residues long: Holliday junction branch migration complex subunit RuvB (331 aa).

Residues 1–182 (MDDRMVDQAL…FGVHLRLEYY (182 aa)) are large ATPase domain (RuvB-L). ATP contacts are provided by residues L21, R22, G63, K66, T67, T68, 129–131 (EDF), R172, Y182, and R219. T67 contacts Mg(2+). Residues 183–253 (NENDLKEIII…TTKQALQLLQ (71 aa)) are small ATPAse domain (RuvB-S). Residues 256 to 331 (AEGLDYIDHK…AYEHFKNFNK (76 aa)) form a head domain (RuvB-H) region. DNA contacts are provided by R292, R311, and R316.

Belongs to the RuvB family. As to quaternary structure, homohexamer. Forms an RuvA(8)-RuvB(12)-Holliday junction (HJ) complex. HJ DNA is sandwiched between 2 RuvA tetramers; dsDNA enters through RuvA and exits via RuvB. An RuvB hexamer assembles on each DNA strand where it exits the tetramer. Each RuvB hexamer is contacted by two RuvA subunits (via domain III) on 2 adjacent RuvB subunits; this complex drives branch migration. In the full resolvosome a probable DNA-RuvA(4)-RuvB(12)-RuvC(2) complex forms which resolves the HJ.

It is found in the cytoplasm. The catalysed reaction is ATP + H2O = ADP + phosphate + H(+). Functionally, the RuvA-RuvB-RuvC complex processes Holliday junction (HJ) DNA during genetic recombination and DNA repair, while the RuvA-RuvB complex plays an important role in the rescue of blocked DNA replication forks via replication fork reversal (RFR). RuvA specifically binds to HJ cruciform DNA, conferring on it an open structure. The RuvB hexamer acts as an ATP-dependent pump, pulling dsDNA into and through the RuvAB complex. RuvB forms 2 homohexamers on either side of HJ DNA bound by 1 or 2 RuvA tetramers; 4 subunits per hexamer contact DNA at a time. Coordinated motions by a converter formed by DNA-disengaged RuvB subunits stimulates ATP hydrolysis and nucleotide exchange. Immobilization of the converter enables RuvB to convert the ATP-contained energy into a lever motion, pulling 2 nucleotides of DNA out of the RuvA tetramer per ATP hydrolyzed, thus driving DNA branch migration. The RuvB motors rotate together with the DNA substrate, which together with the progressing nucleotide cycle form the mechanistic basis for DNA recombination by continuous HJ branch migration. Branch migration allows RuvC to scan DNA until it finds its consensus sequence, where it cleaves and resolves cruciform DNA. This chain is Holliday junction branch migration complex subunit RuvB, found in Staphylococcus haemolyticus (strain JCSC1435).